A 98-amino-acid polypeptide reads, in one-letter code: Putative zinc finger protein ORF98b (98 aa).

Residues G54–H77 form a C2H2-type zinc finger.

The protein is Putative zinc finger protein ORF98b of Acidianus convivator (ATV).